We begin with the raw amino-acid sequence, 484 residues long: Glutamate--tRNA ligase (484 aa).

Residues 11–21 (PSPTGLLHIGN) carry the 'HIGH' region motif. A 'KMSKS' region motif is present at residues 255 to 259 (KLSKR). Residue Lys258 coordinates ATP.

It belongs to the class-I aminoacyl-tRNA synthetase family. Glutamate--tRNA ligase type 1 subfamily. As to quaternary structure, monomer.

It localises to the cytoplasm. The catalysed reaction is tRNA(Glu) + L-glutamate + ATP = L-glutamyl-tRNA(Glu) + AMP + diphosphate. In terms of biological role, catalyzes the attachment of glutamate to tRNA(Glu) in a two-step reaction: glutamate is first activated by ATP to form Glu-AMP and then transferred to the acceptor end of tRNA(Glu). This Streptococcus agalactiae serotype Ia (strain ATCC 27591 / A909 / CDC SS700) protein is Glutamate--tRNA ligase.